Here is a 116-residue protein sequence, read N- to C-terminus: Ribosome-binding factor A (116 aa).

This sequence belongs to the RbfA family. In terms of assembly, monomer. Binds 30S ribosomal subunits, but not 50S ribosomal subunits or 70S ribosomes.

It is found in the cytoplasm. Functionally, one of several proteins that assist in the late maturation steps of the functional core of the 30S ribosomal subunit. Associates with free 30S ribosomal subunits (but not with 30S subunits that are part of 70S ribosomes or polysomes). Required for efficient processing of 16S rRNA. May interact with the 5'-terminal helix region of 16S rRNA. The sequence is that of Ribosome-binding factor A from Levilactobacillus brevis (strain ATCC 367 / BCRC 12310 / CIP 105137 / JCM 1170 / LMG 11437 / NCIMB 947 / NCTC 947) (Lactobacillus brevis).